The sequence spans 314 residues: MEEKNQTIVMEFFFLGLTDHLYQKIALFITILFVYLVTLGGNLGMITLIWADPRLHTPMYFFLSHLSFVDMCSSSSIAPKMLCDIFAEEKRISFMGCAAQMWFFGFFVGTECFLLASMAYDRYTAICKPLLYTLLMSQRVCVHLVVGPYVFAIINITTHTTLAFCLPFCGSNTINHFFCDVSPLLSLACADSWVNKVVLFVLSGAIGVFSGLIIIVSYVSILMTIFKIQTADGKQKAFSTCSSHLSAVSILYGTLFFIYVRPSASFSLNINKMISLFYTVVIPMLNPLIYSLRNKEVKGAFRRKVQKKHFPAGR.

Over 1–25 the chain is Extracellular; the sequence is MEEKNQTIVMEFFFLGLTDHLYQKI. Residue Asn5 is glycosylated (N-linked (GlcNAc...) asparagine). The chain crosses the membrane as a helical span at residues 26-46; it reads ALFITILFVYLVTLGGNLGMI. The Cytoplasmic segment spans residues 47-54; the sequence is TLIWADPR. A helical membrane pass occupies residues 55–75; sequence LHTPMYFFLSHLSFVDMCSSS. Residues 76–99 are Extracellular-facing; the sequence is SIAPKMLCDIFAEEKRISFMGCAA. Cysteines 97 and 189 form a disulfide. A helical membrane pass occupies residues 100-120; that stretch reads QMWFFGFFVGTECFLLASMAY. Residues 121–133 are Cytoplasmic-facing; the sequence is DRYTAICKPLLYT. Residues 134 to 154 traverse the membrane as a helical segment; that stretch reads LLMSQRVCVHLVVGPYVFAII. Residues 155 to 196 are Extracellular-facing; sequence NITTHTTLAFCLPFCGSNTINHFFCDVSPLLSLACADSWVNK. The chain crosses the membrane as a helical span at residues 197–217; the sequence is VVLFVLSGAIGVFSGLIIIVS. The Cytoplasmic portion of the chain corresponds to 218–237; sequence YVSILMTIFKIQTADGKQKA. A helical transmembrane segment spans residues 238–258; sequence FSTCSSHLSAVSILYGTLFFI. Topologically, residues 259–271 are extracellular; it reads YVRPSASFSLNIN. A helical membrane pass occupies residues 272-292; the sequence is KMISLFYTVVIPMLNPLIYSL. Residues 293–312 lie on the Cytoplasmic side of the membrane; it reads RNKEVKGAFRRKVQKKHFPA.

Belongs to the G-protein coupled receptor 1 family.

Its subcellular location is the cell membrane. Potential odorant receptor. In Mus musculus (Mouse), this protein is Olfactory receptor 5G29.